The following is a 287-amino-acid chain: MASGREIKSKIKSVQNTRKVTRALEMVSASKIRKAQEQMKISRPYAQAMKQMIGHLAQANTEYLHPFLIAHKQVKRIGYIVISSDRGLAGGLNNNLFRKMLGEMHQWQDNGAEVDIVTIGQKASVFFRRIKVNILGSVTHLGDTPRLEQLIGVIKVMLDAYTEEKLDRVYLVYNHFINTMVQKASFDQLLPLLAAKDKVAHHDWDYLYEPDAATVLEHVMTRYIESLVYQAMLENIASEHAARMVAMKAASDNANKLIGTLQLVYNKARQAAITQEISEIVGGAAAV.

It belongs to the ATPase gamma chain family. As to quaternary structure, F-type ATPases have 2 components, CF(1) - the catalytic core - and CF(0) - the membrane proton channel. CF(1) has five subunits: alpha(3), beta(3), gamma(1), delta(1), epsilon(1). CF(0) has three main subunits: a, b and c.

Its subcellular location is the cell inner membrane. Its function is as follows. Produces ATP from ADP in the presence of a proton gradient across the membrane. The gamma chain is believed to be important in regulating ATPase activity and the flow of protons through the CF(0) complex. The protein is ATP synthase gamma chain of Xylella fastidiosa (strain M23).